Reading from the N-terminus, the 1082-residue chain is RE1-silencing transcription factor (1082 aa).

Residues 32–117 (DLHELSKAEL…SLELSAVEPQ (86 aa)) are interaction with SIN3A. The interaction with SIN3B stretch occupies residues 43–57 (APQLIMLANVALTGE). An interaction with ZFP90 region spans residues 140–413 (PVAEDKCRSS…KSKHPTCPSK (274 aa)). The segment at 154–176 (FRCKPCQYEAESEEQFVHHIRIH) adopts a C2H2-type 1 zinc-finger fold. The interval 196–207 (SGSSPAEEGEFS) is required for binding to the neuron-restrictive silencer element. 7 consecutive C2H2-type zinc fingers follow at residues 211 to 235 (IRCD…HHLR), 243 to 265 (YKCI…LRNH), 271 to 293 (YTCS…VRTH), 299 to 321 (YKCE…MRTH), 327 to 350 (FKCD…RQVH), 356 to 378 (LNCP…VELH), and 384 to 407 (FNCP…KSKH). Disordered stretches follow at residues 408-809 (PTCP…ELSL) and 831-1027 (SKLL…KAGL). A compositionally biased stretch (basic and acidic residues) spans 440 to 475 (EKMENEQTKTKGDVSGKKNEKPVKAVGKDASKEKKP). Residues 477–497 (SSVSVVQVTTRTRKSAVAAET) are compositionally biased toward low complexity. Positions 581–597 (KGTKKTPPKTKTSKKGG) are enriched in basic residues. A compositionally biased stretch (polar residues) spans 630–640 (VTGSGSSQTEL). Composition is skewed to pro residues over residues 684-713 (YPQP…PAPP) and 729-751 (KEPP…PPPM). 2 stretches are compositionally biased toward basic and acidic residues: residues 798-807 (LRKDRAEKEL) and 854-864 (NSREETPKDQE). Residues 900-909 (RVSSSEQNSA) are compositionally biased toward polar residues. S950 is modified (phosphoserine). Residues 985 to 1063 (EGIHSHDGSD…HLNRHLVNVY (79 aa)) form an interaction with RCOR1 region. The segment at 1036–1058 (FVCIFCDRSFRKEKDYSKHLNRH) adopts a C2H2-type 9 zinc-finger fold.

As to quaternary structure, isoform 1 and isoform 2 form heterodimers. Isoform 2: Forms homodimers and homooligomers; binds to the neuron-restrictive silencer element (NRSE) as monomer. Interacts with SIN3A, SIN3B and RCOR1. Interacts with CDYL. Interacts with EHMT1 and EHMT2 only in the presence of CDYL. Part of a complex containing at least CDYL, REST, WIZ, SETB1, EHMT1 and EHMT2. Interacts (via zinc-finger DNA-binding domain) with ZFP90 (via N- and C-termini); the interaction inhibits REST repressor activity. Interacts (via C2H2-type zinc finger 5) with PRICKLE1. Interacts with FBXW11 and BTRC. Interacts with USP7. In terms of processing, O-glycosylated. Post-translationally, phosphorylated; phosphorylation is required for ubiquitination. Ubiquitinated; ubiquitination is mediated by BTRC and leads to proteasomal degradation in G2 phase. Ubiquitination increases during neuronal differentiation. Deubiquitinated by USP7; leading to its stabilization and promoting the maintenance of neural progenitor cells. As to expression, expressed in the hippocampus, including quiescent neuronal progenitor (QNP) cells, transient-amplifying progenitor (TAP) cells, neuroblasts and mature neurons (at protein level). Expressed in embryonic stem cells (at protein level). Expressed in many non-neuronal tissues including the heart and liver. Abundantly expressed in osteoblastic lineage cells. Expressed in the spleen, kidney, blood cells, cortex, neocortex and in the utricle, saccule and organ of Corti of the inner ear. Isoform 2: Expressed in the cortex, neocortex and in the utricle, saccule and organ of Corti of the inner ear.

It is found in the nucleus. The protein resides in the cytoplasm. Its function is as follows. Transcriptional repressor which binds neuron-restrictive silencer element (NRSE) and represses neuronal gene transcription in non-neuronal cells. Restricts the expression of neuronal genes by associating with two distinct corepressors, SIN3A and RCOR1, which in turn recruit histone deacetylase to the promoters of REST-regulated genes. Mediates repression by recruiting the BHC complex at RE1/NRSE sites which acts by deacetylating and demethylating specific sites on histones, thereby acting as a chromatin modifier. Transcriptional repression by REST-CDYL via the recruitment of histone methyltransferase EHMT2 may be important in transformation suppression. Represses the expression of SRRM4 in non-neural cells to prevent the activation of neural-specific splicing events and to prevent production of REST isoform 2. Repressor activity may be inhibited by forming heterodimers with isoform 2, thereby preventing binding to NRSE or binding to corepressors and leading to derepression of target genes. Also maintains repression of neuronal genes in neural stem cells, and allows transcription and differentiation into neurons by dissociation from RE1/NRSE sites of target genes. Thereby is involved in maintaining the quiescent state of adult neural stem cells and preventing premature differentiation into mature neurons. Plays a role in the developmental switch in synaptic NMDA receptor composition during postnatal development, by repressing GRIN2B expression and thereby altering NMDA receptor properties from containing primarily GRIN2B to primarily GRIN2A subunits. Acts as a regulator of osteoblast differentiation. Key repressor of gene expression in hypoxia; represses genes in hypoxia by direct binding to an RE1/NRSE site on their promoter regions. May also function in stress resistance in the brain during aging; possibly by regulating expression of genes involved in cell death and in the stress response. Repressor of gene expression in the hippocampus after ischemia by directly binding to RE1/NRSE sites and recruiting SIN3A and RCOR1 to promoters of target genes, thereby promoting changes in chromatin modifications and ischemia-induced cell death. After ischemia, might play a role in repression of miR-132 expression in hippocampal neurons, thereby leading to neuronal cell death. Functionally, binds to the 3' region of the neuron-restrictive silencer element (NRSE), with lower affinity than isoform 1. Exhibits weaker repressor activity compared to isoform 1. May negatively regulate the repressor activity of isoform 1 by binding to isoform 1, thereby preventing its binding to NRSE and leading to derepression of target genes. However, in another study, does not appear to be implicated in repressor activity of a NRSE motif-containing reporter construct nor in inhibitory activity on the isoform 1 transcriptional repressor activity. Post-transcriptional inactivation of REST by SRRM4-dependent alternative splicing into isoform 2 is required in mechanosensory hair cells in the inner ear for derepression of neuronal genes, maintenance of hair cells and hearing. The polypeptide is RE1-silencing transcription factor (Rest) (Mus musculus (Mouse)).